The primary structure comprises 176 residues: Probable Brix domain-containing ribosomal biogenesis protein (176 aa).

The 171-residue stretch at 6–176 folds into the Brix domain; sequence IEIVFTSSRD…QLYDRNKNIN (171 aa).

Probably involved in the biogenesis of the ribosome. The protein is Probable Brix domain-containing ribosomal biogenesis protein of Sulfurisphaera tokodaii (strain DSM 16993 / JCM 10545 / NBRC 100140 / 7) (Sulfolobus tokodaii).